We begin with the raw amino-acid sequence, 434 residues long: UDP-glucose 6-dehydrogenase (434 aa).

Residues 2–19, Val11, Asp30, Lys35, Thr121, and Glu152 contribute to the NAD(+) site; that span reads NITFIGSGYVGLVSGIIM. Substrate is bound by residues 148-152, Lys204, Asn208, 249-253, and Gly257; these read EFLRE and FLNAG. Cys260 serves as the catalytic Nucleophile. NAD(+) is bound at residue Lys263. Lys321 provides a ligand contact to substrate. Residue Arg328 coordinates NAD(+).

It belongs to the UDP-glucose/GDP-mannose dehydrogenase family.

The catalysed reaction is UDP-alpha-D-glucose + 2 NAD(+) + H2O = UDP-alpha-D-glucuronate + 2 NADH + 3 H(+). Its pathway is nucleotide-sugar biosynthesis; UDP-alpha-D-glucuronate biosynthesis; UDP-alpha-D-glucuronate from UDP-alpha-D-glucose: step 1/1. This is UDP-glucose 6-dehydrogenase (udg) from Rickettsia typhi (strain ATCC VR-144 / Wilmington).